The following is a 360-amino-acid chain: Phospho-N-acetylmuramoyl-pentapeptide-transferase (360 aa).

The next 10 helical transmembrane spans lie at 26-46 (AIVSLLTALFISLWMGPRMIA), 72-92 (PTMGGIMILTAIVVSVLLWAY), 94-114 (SNPYVWCVLTVLIGYGIIGFV), 132-152 (WKYFWMSVIALGVAFALYLAG), 168-188 (VMPQLGLFYILLAYFVIVGTG), 199-219 (GLAIMPTVFVAGGFALVAWAT), 236-256 (AGELVIVCTAIVGAGLGFLWF), 263-283 (VFMGDVGSLALGGALGIIAVL), 288-308 (FLLVIMGGVFVVETLSVILQV), and 338-358 (VIVRFWIISLMLVLIGLATLK).

This sequence belongs to the glycosyltransferase 4 family. MraY subfamily. The cofactor is Mg(2+).

Its subcellular location is the cell inner membrane. It catalyses the reaction UDP-N-acetyl-alpha-D-muramoyl-L-alanyl-gamma-D-glutamyl-meso-2,6-diaminopimeloyl-D-alanyl-D-alanine + di-trans,octa-cis-undecaprenyl phosphate = di-trans,octa-cis-undecaprenyl diphospho-N-acetyl-alpha-D-muramoyl-L-alanyl-D-glutamyl-meso-2,6-diaminopimeloyl-D-alanyl-D-alanine + UMP. It functions in the pathway cell wall biogenesis; peptidoglycan biosynthesis. Catalyzes the initial step of the lipid cycle reactions in the biosynthesis of the cell wall peptidoglycan: transfers peptidoglycan precursor phospho-MurNAc-pentapeptide from UDP-MurNAc-pentapeptide onto the lipid carrier undecaprenyl phosphate, yielding undecaprenyl-pyrophosphoryl-MurNAc-pentapeptide, known as lipid I. The polypeptide is Phospho-N-acetylmuramoyl-pentapeptide-transferase (Enterobacter sp. (strain 638)).